A 416-amino-acid chain; its full sequence is Glutamyl-tRNA reductase (416 aa).

Substrate contacts are provided by residues 49–52 (TCNR), Ser-105, 110–112 (EPQ), and Gln-116. Cys-50 serves as the catalytic Nucleophile. Residue 185–190 (GAGETI) coordinates NADP(+).

The protein belongs to the glutamyl-tRNA reductase family. As to quaternary structure, homodimer.

The catalysed reaction is (S)-4-amino-5-oxopentanoate + tRNA(Glu) + NADP(+) = L-glutamyl-tRNA(Glu) + NADPH + H(+). It functions in the pathway porphyrin-containing compound metabolism; protoporphyrin-IX biosynthesis; 5-aminolevulinate from L-glutamyl-tRNA(Glu): step 1/2. In terms of biological role, catalyzes the NADPH-dependent reduction of glutamyl-tRNA(Glu) to glutamate 1-semialdehyde (GSA). The sequence is that of Glutamyl-tRNA reductase from Shewanella amazonensis (strain ATCC BAA-1098 / SB2B).